Here is a 273-residue protein sequence, read N- to C-terminus: Vitamin B12-binding protein (273 aa).

The signal sequence occupies residues 1 to 18 (MMKTLSSLLLLFSVSLQA). One can recognise a Fe/B12 periplasmic-binding domain in the interval 23–273 (RVISLAPHAT…EHFASIEQKR (251 aa)). Cysteines 183 and 263 form a disulfide.

It belongs to the BtuF family. The complex is composed of two ATP-binding proteins (BtuD), two transmembrane proteins (BtuC) and a solute-binding protein (BtuF).

The protein resides in the periplasm. Its function is as follows. Part of the ABC transporter complex BtuCDF involved in vitamin B12 import. Binds vitamin B12 and delivers it to the periplasmic surface of BtuC. This chain is Vitamin B12-binding protein, found in Vibrio vulnificus (strain YJ016).